The sequence spans 714 residues: Fatty acid oxidation complex subunit alpha (714 aa).

The interval 1–190 (MEMASAFTLN…KLGLVDDVVP (190 aa)) is enoyl-CoA hydratase. A 3-hydroxyacyl-CoA dehydrogenase region spans residues 306–714 (APLNSVGILG…FWKTTATDLQ (409 aa)).

It in the N-terminal section; belongs to the enoyl-CoA hydratase/isomerase family. The protein in the central section; belongs to the 3-hydroxyacyl-CoA dehydrogenase family. As to quaternary structure, heterotetramer of two alpha chains (FadJ) and two beta chains (FadI).

Its subcellular location is the cytoplasm. It catalyses the reaction a (3S)-3-hydroxyacyl-CoA = a (2E)-enoyl-CoA + H2O. The catalysed reaction is a 4-saturated-(3S)-3-hydroxyacyl-CoA = a (3E)-enoyl-CoA + H2O. The enzyme catalyses a (3S)-3-hydroxyacyl-CoA + NAD(+) = a 3-oxoacyl-CoA + NADH + H(+). It carries out the reaction (3S)-3-hydroxybutanoyl-CoA = (3R)-3-hydroxybutanoyl-CoA. The protein operates within lipid metabolism; fatty acid beta-oxidation. Its function is as follows. Catalyzes the formation of a hydroxyacyl-CoA by addition of water on enoyl-CoA. Also exhibits 3-hydroxyacyl-CoA epimerase and 3-hydroxyacyl-CoA dehydrogenase activities. The protein is Fatty acid oxidation complex subunit alpha of Escherichia coli O17:K52:H18 (strain UMN026 / ExPEC).